We begin with the raw amino-acid sequence, 433 residues long: MAQFYSAKRRTTTRQIITVSVNDLDSFGQGVARHNGKTLFIPGLLPQENAEVTVTEDKKQYARAKVVRRLSDSPERETPRCPHFGVCGGCQQQHASVDLQQRSKSAALARLMKHEVSEVIADVPWGYRRRARLSLNYLPKTQQLQMGFRKAGSSDIVDVKQCPILVPQLEALLPKVRACLGSLQAMRHLGHVELVQATSGTLMILRHTAPLSSADREKLERFSHSEGLDLYLAPDSEILETVSGEMPWYDSNGLRLTFSPRDFIQVNAGVNQKMVARALEWLEVEPEDRVLDLFCGMGNFTLPLATQAASVVGVEGVPALVEKGQQNARLNCLQNVTFYHENLEEDVTKQPWAKNGFDKVLLDPARAGAAGVMQQIIKLEPIRIVYVSCNPATLARDSEALLKAGYTIARLAMLDMFPHTGHLESMVLFSRVK.

Residues 10–68 (RTTTRQIITVSVNDLDSFGQGVARHNGKTLFIPGLLPQENAEVTVTEDKKQYARAKVVR) enclose the TRAM domain. Residues Cys-81, Cys-87, Cys-90, and Cys-162 each contribute to the [4Fe-4S] cluster site. Gln-265, Phe-294, Asn-299, Glu-315, Asn-342, and Asp-363 together coordinate S-adenosyl-L-methionine. The active-site Nucleophile is the Cys-389.

This sequence belongs to the class I-like SAM-binding methyltransferase superfamily. RNA M5U methyltransferase family. RlmD subfamily.

It carries out the reaction uridine(1939) in 23S rRNA + S-adenosyl-L-methionine = 5-methyluridine(1939) in 23S rRNA + S-adenosyl-L-homocysteine + H(+). In terms of biological role, catalyzes the formation of 5-methyl-uridine at position 1939 (m5U1939) in 23S rRNA. This is 23S rRNA (uracil(1939)-C(5))-methyltransferase RlmD from Escherichia coli O157:H7.